The primary structure comprises 208 residues: FMN-dependent NADH:quinone oxidoreductase 1 (208 aa).

This sequence belongs to the azoreductase type 1 family. Homodimer. Requires FMN as cofactor.

The enzyme catalyses 2 a quinone + NADH + H(+) = 2 a 1,4-benzosemiquinone + NAD(+). The catalysed reaction is N,N-dimethyl-1,4-phenylenediamine + anthranilate + 2 NAD(+) = 2-(4-dimethylaminophenyl)diazenylbenzoate + 2 NADH + 2 H(+). In terms of biological role, quinone reductase that provides resistance to thiol-specific stress caused by electrophilic quinones. Its function is as follows. Also exhibits azoreductase activity. Catalyzes the reductive cleavage of the azo bond in aromatic azo compounds to the corresponding amines. This is FMN-dependent NADH:quinone oxidoreductase 1 from Bacillus licheniformis (strain ATCC 14580 / DSM 13 / JCM 2505 / CCUG 7422 / NBRC 12200 / NCIMB 9375 / NCTC 10341 / NRRL NRS-1264 / Gibson 46).